The primary structure comprises 238 residues: Large ribosomal subunit protein uL2 (238 aa).

Polar residues predominate over residues 1 to 11; that stretch reads MGKRLISQNRG. 2 disordered regions span residues 1–22 and 202–223; these read MGKRLISQNRGRGTPTYRAPSH and FGGGAWKHPGKPTTVSRNAPPG.

It belongs to the universal ribosomal protein uL2 family. Part of the 50S ribosomal subunit. Forms a bridge to the 30S subunit in the 70S ribosome.

In terms of biological role, one of the primary rRNA binding proteins. Required for association of the 30S and 50S subunits to form the 70S ribosome, for tRNA binding and peptide bond formation. It has been suggested to have peptidyltransferase activity; this is somewhat controversial. Makes several contacts with the 16S rRNA in the 70S ribosome. The sequence is that of Large ribosomal subunit protein uL2 from Methanosarcina mazei (strain ATCC BAA-159 / DSM 3647 / Goe1 / Go1 / JCM 11833 / OCM 88) (Methanosarcina frisia).